The sequence spans 410 residues: MRYLLSAPSQIKATIQLPASKSISNRALIIHALSKGDDVPSNLSDCDDTQVMIKALTEGNEVIDILAAGTAMRFLTAYLSSTPGIHTITGTERMQQRPIQILVNALRELGAHIEYVRNEGFPPLRIEGRELTGSEITLKGNVSSQYISALLMIGPVLKNGLQLRLTGEIVSRPYINLTLQLMKDFGASASWTSDQNIQVDPQPYHCLPFTVESDWSAASYWYQIAALSPQADIELTGLFRHSYQGDSRGAEVFARLGVATEYTETGIRLKKNGTCVERLDEDFVDIPDLAQTFVVTCALLNVPFRFTGLQSLKIKETDRIEALKTEMKKLGYILHDKNDSILSWDGERVEQQTCPVIKTYEDHRMAMAFAPAAIHYPTIQIDEPQVVSKSYPGYWDDLRKAGFGIKVGEE.

3-phosphoshikimate is bound by residues K21, S22, and R26. Residue K21 coordinates phosphoenolpyruvate. The phosphoenolpyruvate site is built by G69 and R97. 6 residues coordinate 3-phosphoshikimate: S143, S144, Q145, S171, D288, and K315. Phosphoenolpyruvate is bound at residue Q145. D288 acts as the Proton acceptor in catalysis. Phosphoenolpyruvate is bound by residues R319, R364, and K389.

The protein belongs to the EPSP synthase family. Monomer.

It localises to the cytoplasm. It catalyses the reaction 3-phosphoshikimate + phosphoenolpyruvate = 5-O-(1-carboxyvinyl)-3-phosphoshikimate + phosphate. It functions in the pathway metabolic intermediate biosynthesis; chorismate biosynthesis; chorismate from D-erythrose 4-phosphate and phosphoenolpyruvate: step 6/7. Catalyzes the transfer of the enolpyruvyl moiety of phosphoenolpyruvate (PEP) to the 5-hydroxyl of shikimate-3-phosphate (S3P) to produce enolpyruvyl shikimate-3-phosphate and inorganic phosphate. This chain is 3-phosphoshikimate 1-carboxyvinyltransferase, found in Bacteroides fragilis (strain ATCC 25285 / DSM 2151 / CCUG 4856 / JCM 11019 / LMG 10263 / NCTC 9343 / Onslow / VPI 2553 / EN-2).